Consider the following 1460-residue polypeptide: Centrosomal protein of 164 kDa (1460 aa).

An interaction with ATRIP region spans residues 1–194 (MAGRPLRIGD…PSQGLKTSAY (194 aa)). The WW domain maps to 56 to 89 (APLPGEWKPCQDITGDIYYFNFANGQSMWDHPCD). Residues 107 to 135 (GAIKKKKKKKEKKDKKDRDPPKSSLALGS) form a disordered region. Residues 109-119 (IKKKKKKKEKK) are compositionally biased toward basic residues. Position 186 is a phosphoserine; by ATR and ATM (serine 186). A Phosphoserine modification is found at serine 201. Disordered stretches follow at residues 213–412 (GLGE…HGLD), 440–593 (AQQP…AALK), and 658–719 (EEAR…QKNR). Acidic residues predominate over residues 217–227 (ETNEEDEEESD). A compositionally biased stretch (basic and acidic residues) spans 256–270 (ESLRTSQPEEKKDVS). Residues 285 to 296 (SSPGADSSLSSA) show a composition bias toward low complexity. 2 stretches are compositionally biased toward basic and acidic residues: residues 310 to 323 (LPEK…EPKI) and 357 to 367 (EGSRREEAAKE). Residues 453–464 (QSSQDELQSKQS) show a composition bias toward low complexity. Basic and acidic residues predominate over residues 465 to 481 (KGLEERLSPPLPHEERA). Residues 514 to 525 (SAASLSLQLSLQ) show a composition bias toward low complexity. Over residues 537-546 (EKGKEQHSQA) the composition is skewed to basic and acidic residues. Position 566 is a phosphoserine (serine 566). Composition is skewed to basic and acidic residues over residues 658–668 (EEARMREEESQ) and 686–719 (DQIR…QKNR). Residues 1154-1206 (GIKALEDMRKNLEKETRHLDEMKSAMRKGHNLLKKKEEKLNQLESSLWEEASD) adopt a coiled-coil conformation. A disordered region spans residues 1290–1310 (PPPLLASMPAQLPPRDPKSTP). A phosphoserine mark is found at serine 1386, serine 1388, and serine 1443.

In terms of assembly, interacts (via N-terminus) with ATRIP. Interacts with ATM, ATR and MDC1. Interacts with XPA (via N-terminus) upon UV irradiation. Interacts with CEP83, CCDC92, TTBK2, DVL3, NPHP3 and weakly with NPHP4. Interacts with DZIP1. In terms of processing, phosphorylation at Ser-186 is induced upon DNA-damage caused by treatment with IR irradiation, UV irradiation, hydroxyurea or amphidicolin. Also MDC1-mediated chromatin remodeling is critical for DNA damage-induced phosphorylation. Expressed in several cell lines.

It is found in the cytoplasm. It localises to the cytoskeleton. Its subcellular location is the microtubule organizing center. The protein localises to the centrosome. The protein resides in the centriole. It is found in the nucleus. In terms of biological role, plays a role in microtubule organization and/or maintenance for the formation of primary cilia (PC), a microtubule-based structure that protrudes from the surface of epithelial cells. Plays a critical role in G2/M checkpoint and nuclear divisions. A key player in the DNA damage-activated ATR/ATM signaling cascade since it is required for the proper phosphorylation of H2AX, RPA, CHEK2 and CHEK1. Plays a critical role in chromosome segregation, acting as a mediator required for the maintenance of genomic stability through modulation of MDC1, RPA and CHEK1. This Homo sapiens (Human) protein is Centrosomal protein of 164 kDa (CEP164).